The primary structure comprises 649 residues: Protein translocase subunit SecA 2 (649 aa).

ATP is bound by residues Gln105, 123–127 (GEGKT), and Asp535.

It belongs to the SecA family. Monomer and homodimer. Part of the essential Sec protein translocation apparatus which comprises SecA, SecYEG and auxiliary proteins SecDF-YajC and YidC.

The protein resides in the cell inner membrane. Its subcellular location is the cytoplasm. It catalyses the reaction ATP + H2O + cellular proteinSide 1 = ADP + phosphate + cellular proteinSide 2.. Part of the Sec protein translocase complex. Interacts with the SecYEG preprotein conducting channel. Has a central role in coupling the hydrolysis of ATP to the transfer of proteins into and across the cell membrane, serving both as a receptor for the preprotein-SecB complex and as an ATP-driven molecular motor driving the stepwise translocation of polypeptide chains across the membrane. This chain is Protein translocase subunit SecA 2, found in Magnetococcus marinus (strain ATCC BAA-1437 / JCM 17883 / MC-1).